The following is a 554-amino-acid chain: Urocanate hydratase (554 aa).

Residues 52-53 (GG), Gln130, 176-178 (GMG), Glu196, Arg201, 242-243 (NA), 263-267 (QTSAH), 273-274 (YL), and Tyr322 contribute to the NAD(+) site. Residue Cys410 is part of the active site. Gly492 is a binding site for NAD(+).

It belongs to the urocanase family. It depends on NAD(+) as a cofactor.

The protein resides in the cytoplasm. It carries out the reaction 4-imidazolone-5-propanoate = trans-urocanate + H2O. It participates in amino-acid degradation; L-histidine degradation into L-glutamate; N-formimidoyl-L-glutamate from L-histidine: step 2/3. In terms of biological role, catalyzes the conversion of urocanate to 4-imidazolone-5-propionate. The protein is Urocanate hydratase of Shewanella halifaxensis (strain HAW-EB4).